We begin with the raw amino-acid sequence, 348 residues long: 3-isopropylmalate dehydrogenase (348 aa).

Residue 76 to 87 (GPKWTDPNNRPE) coordinates NAD(+). Residues arginine 94, arginine 104, arginine 132, and aspartate 217 each coordinate substrate. Positions 217, 241, and 245 each coordinate Mg(2+). 275–287 (GSAPDIAGKNVAN) contacts NAD(+).

Belongs to the isocitrate and isopropylmalate dehydrogenases family. LeuB type 1 subfamily. Homodimer. Mg(2+) serves as cofactor. The cofactor is Mn(2+).

The protein localises to the cytoplasm. It carries out the reaction (2R,3S)-3-isopropylmalate + NAD(+) = 4-methyl-2-oxopentanoate + CO2 + NADH. It participates in amino-acid biosynthesis; L-leucine biosynthesis; L-leucine from 3-methyl-2-oxobutanoate: step 3/4. In terms of biological role, catalyzes the oxidation of 3-carboxy-2-hydroxy-4-methylpentanoate (3-isopropylmalate) to 3-carboxy-4-methyl-2-oxopentanoate. The product decarboxylates to 4-methyl-2 oxopentanoate. The polypeptide is 3-isopropylmalate dehydrogenase (Staphylococcus aureus (strain bovine RF122 / ET3-1)).